A 461-amino-acid chain; its full sequence is Cysteine--tRNA ligase (461 aa).

Cys28 serves as a coordination point for Zn(2+). The 'HIGH' region motif lies at 30–40; the sequence is ITVYDLCHIGH. Zn(2+) is bound by residues Cys209, His234, and Glu238. A 'KMSKS' region motif is present at residues 266–270; sequence KMSKS. Lys269 provides a ligand contact to ATP.

The protein belongs to the class-I aminoacyl-tRNA synthetase family. In terms of assembly, monomer. Requires Zn(2+) as cofactor.

The protein localises to the cytoplasm. It carries out the reaction tRNA(Cys) + L-cysteine + ATP = L-cysteinyl-tRNA(Cys) + AMP + diphosphate. This chain is Cysteine--tRNA ligase, found in Klebsiella pneumoniae (strain 342).